We begin with the raw amino-acid sequence, 484 residues long: ATP synthase subunit beta (484 aa).

168 to 175 serves as a coordination point for ATP; that stretch reads GGAGVGKT.

It belongs to the ATPase alpha/beta chains family. As to quaternary structure, F-type ATPases have 2 components, CF(1) - the catalytic core - and CF(0) - the membrane proton channel. CF(1) has five subunits: alpha(3), beta(3), gamma(1), delta(1), epsilon(1). CF(0) has three main subunits: a(1), b(2) and c(9-12). The alpha and beta chains form an alternating ring which encloses part of the gamma chain. CF(1) is attached to CF(0) by a central stalk formed by the gamma and epsilon chains, while a peripheral stalk is formed by the delta and b chains.

The protein localises to the cell membrane. It carries out the reaction ATP + H2O + 4 H(+)(in) = ADP + phosphate + 5 H(+)(out). In terms of biological role, produces ATP from ADP in the presence of a proton gradient across the membrane. The catalytic sites are hosted primarily by the beta subunits. The polypeptide is ATP synthase subunit beta (Renibacterium salmoninarum (strain ATCC 33209 / DSM 20767 / JCM 11484 / NBRC 15589 / NCIMB 2235)).